Consider the following 383-residue polypeptide: ATP phosphoribosyltransferase regulatory subunit (383 aa).

It belongs to the class-II aminoacyl-tRNA synthetase family. HisZ subfamily. As to quaternary structure, heteromultimer composed of HisG and HisZ subunits.

It localises to the cytoplasm. The protein operates within amino-acid biosynthesis; L-histidine biosynthesis; L-histidine from 5-phospho-alpha-D-ribose 1-diphosphate: step 1/9. Its function is as follows. Required for the first step of histidine biosynthesis. May allow the feedback regulation of ATP phosphoribosyltransferase activity by histidine. The polypeptide is ATP phosphoribosyltransferase regulatory subunit (Cupriavidus pinatubonensis (strain JMP 134 / LMG 1197) (Cupriavidus necator (strain JMP 134))).